We begin with the raw amino-acid sequence, 301 residues long: 4-hydroxy-tetrahydrodipicolinate synthase (301 aa).

Thr-57 lines the pyruvate pocket. Tyr-145 (proton donor/acceptor) is an active-site residue. Catalysis depends on Lys-173, which acts as the Schiff-base intermediate with substrate. Ile-213 is a binding site for pyruvate.

It belongs to the DapA family. As to quaternary structure, homotetramer; dimer of dimers.

Its subcellular location is the cytoplasm. It catalyses the reaction L-aspartate 4-semialdehyde + pyruvate = (2S,4S)-4-hydroxy-2,3,4,5-tetrahydrodipicolinate + H2O + H(+). It functions in the pathway amino-acid biosynthesis; L-lysine biosynthesis via DAP pathway; (S)-tetrahydrodipicolinate from L-aspartate: step 3/4. Its function is as follows. Catalyzes the condensation of (S)-aspartate-beta-semialdehyde [(S)-ASA] and pyruvate to 4-hydroxy-tetrahydrodipicolinate (HTPA). The polypeptide is 4-hydroxy-tetrahydrodipicolinate synthase (Corynebacterium diphtheriae (strain ATCC 700971 / NCTC 13129 / Biotype gravis)).